Consider the following 1179-residue polypeptide: Integrin alpha-7 (1179 aa).

Residues 1 to 33 (MARIPRCDFLRPPGIYYLITSLLAGLFLPPAIA) form the signal peptide. Topologically, residues 34-1076 (FNLDVMGAIR…YLDPMAVVVE (1043 aa)) are extracellular. FG-GAP repeat units lie at residues 38-103 (VMGA…ETDC), 110-175 (RGAN…IRDE), 185-238 (EGRP…SPDL), 292-349 (DRLT…ATRL), 350-411 (IPEV…HWAD), 412-467 (ISPL…GVVV), and 471-530 (QVLE…IDPR). The N-linked (GlcNAc...) asparagine glycan is linked to N86. Intrachain disulfides connect C94–C103, C140–C163, and C184–C197. Residues D372, N374, D376, D380, D434, N436, D438, D442, D492, D494, N496, Y498, and D500 each coordinate Ca(2+). Disulfide bonds link C539-C546, C552-C615, C681-C687, C781-C792, C939-C993, and C999-C1004. N-linked (GlcNAc...) asparagine glycosylation is present at N784. The segment covering 952-961 (SRDRRRRELG) has biased composition (basic and acidic residues). The disordered stretch occupies residues 952-978 (SRDRRRRELGQPEPQEPPEKVEPSTSW). N-linked (GlcNAc...) asparagine glycosylation occurs at N988. 2 N-linked (GlcNAc...) asparagine glycosylation sites follow: N1023 and N1043. The chain crosses the membrane as a helical span at residues 1077–1102 (GVPWWVILLGVLAGLLVLALLVLLLW). The Cytoplasmic segment spans residues 1103 to 1179 (KLGFFKRAKH…PDGHPVPATA (77 aa)). The GFFKR motif signature appears at 1105 to 1109 (GFFKR). Residues 1134-1153 (KEEKTGTIQRSNWGNSQWEG) are disordered. The segment covering 1139–1152 (GTIQRSNWGNSQWE) has biased composition (polar residues). 3 tandem repeats follow at residues 1155–1158 (DAHP), 1163–1166 (DWHP), and 1171–1174 (DGHP). A 3 X 4 AA repeats of D-X-H-P region spans residues 1155–1174 (DAHPILAADWHPELGPDGHP).

The protein belongs to the integrin alpha chain family. Heterodimer of an alpha and a beta subunit. The alpha subunit is composed of a heavy and a light chain linked by a disulfide bond. Alpha-7 associates with beta-1. Interacts with COMP. Interacts (via C-terminus intracellular tail region) with CIB1; the interaction is stabilized/increased in a calcium- and magnesium-dependent manner. ADP-ribosylated on at least two sites of the extracellular domain in skeletal myotubes (in vitro). In terms of processing, no proteolytic cleavage to produce the 70 kDa form is seen due to the presence of a Gly instead of an arginine residue at position 647. As to expression, isoforms containing segment X2 are found in adult heart, lung and skeletal muscle. Isoforms containing segment X1 are expressed in adult heart, lung and in proliferating skeletal myoblasts but not in adult skeletal muscle. Isoforms containing segment a are exclusively found in skeletal muscle. Isoforms containing segment B are widely expressed. In muscle fibers isoforms containing segment A and B are expressed at myotendinous and neuromuscular junctions; isoforms containing segment C are expressed at neuromuscular junctions and at extrasynaptic sites.

The protein localises to the membrane. Its function is as follows. Integrin alpha-7/beta-1 is the primary laminin receptor on skeletal myoblasts and adult myofibers. During myogenic differentiation, it may induce changes in the shape and mobility of myoblasts, and facilitate their localization at laminin-rich sites of secondary fiber formation. Involved in the maintenance of the myofibers cytoarchitecture as well as for their anchorage, viability and functional integrity. Mice carrying a ITGA7 null allele are viable and fertile, but show progressive muscular dystrophy starting soon after birth, but with a distinct variability in different muscle types. Required to promote contractile phenotype acquisition in differentiated airway smooth muscle (ASM) cells. Acts as a Schwann cell receptor for laminin-2. Acts as a receptor of COMP and mediates its effect on vascular smooth muscle cells (VSMCs) maturation. This chain is Integrin alpha-7 (Itga7), found in Mus musculus (Mouse).